The sequence spans 171 residues: Disulfide bond formation protein B (171 aa).

Residues 1-8 (MQWSYRFV) lie on the Cytoplasmic side of the membrane. Residues 9 to 25 (SGLLVLASIVGMTFALY) traverse the membrane as a helical segment. Topologically, residues 26–43 (LEHFKGLEPCPLCIFQRV) are periplasmic. The cysteines at positions 35 and 38 are disulfide-linked. A helical membrane pass occupies residues 44–60 (GLMAMGIVALIAFLHNP). Residues 61-67 (VSNAFKR) are Cytoplasmic-facing. A helical transmembrane segment spans residues 68-85 (VYAFLATLGILWSVGVAI). Over 86–142 (RHVWLQTLPPDQVPSCGPGLNYLLDALPLKTVLQQVLQGSGECAAIHWTFLGQSLPV) the chain is Periplasmic. Residues Cys101 and Cys128 are joined by a disulfide bond. The chain crosses the membrane as a helical span at residues 143–161 (WSLAYFSLILLVCVWQLLR). At 162-171 (RYPVIVTKKK) the chain is on the cytoplasmic side.

It belongs to the DsbB family.

The protein resides in the cell inner membrane. Required for disulfide bond formation in some periplasmic proteins. Acts by oxidizing the DsbA protein. The sequence is that of Disulfide bond formation protein B from Acinetobacter baylyi (strain ATCC 33305 / BD413 / ADP1).